Here is a 137-residue protein sequence, read N- to C-terminus: Methylglyoxal synthase (137 aa).

The MGS-like domain maps to 1 to 137 (MNIALVAHDQ…EVRKSKSQRI (137 aa)). Substrate is bound by residues His-8, Lys-12, 34 to 37 (TGTT), and 54 to 55 (SG). Residue Asp-60 is the Proton donor/acceptor of the active site. His-87 provides a ligand contact to substrate.

This sequence belongs to the methylglyoxal synthase family.

It catalyses the reaction dihydroxyacetone phosphate = methylglyoxal + phosphate. Catalyzes the formation of methylglyoxal from dihydroxyacetone phosphate. This Clostridioides difficile (strain 630) (Peptoclostridium difficile) protein is Methylglyoxal synthase.